Consider the following 250-residue polypeptide: Mycofactocin precursor peptide peptidase (250 aa).

A divalent metal cation contacts are provided by glutamate 38, histidine 40, aspartate 49, histidine 127, and glutamate 166.

It belongs to the creatininase superfamily. Homooctamer. The cofactor is Fe(2+). It depends on Zn(2+) as a cofactor.

It catalyses the reaction [mycofactocin precursor peptide]-C-terminal glycyl-N-{5-[(4-hydroxyphenyl)methyl]-4,4-dimethyl-2-oxopyrrolidin-3-yl}acetamide + H2O = [mycofactocin precursor peptide]-C-terminal glycine + 3-amino-5-[(4-hydroxyphenyl)methyl]-4,4-dimethyl-2-pyrrolidin-2-one. In terms of biological role, peptidase involved in the biosynthesis of the enzyme cofactor mycofactocin (MFT). Catalyzes cleavage of the MftC-modified MftA peptide to liberate its final two residues, which consist of a cross-linked valine-decarboxylated tyrosine dipeptide (named 3-amino-5-[(4-hydroxyphenyl)methyl]-4,4-dimethyl-2-pyrrolidin-2-one or ADHP). In Mycobacterium ulcerans (strain Agy99), this protein is Mycofactocin precursor peptide peptidase.